The following is a 149-amino-acid chain: Gonadotropin subunit beta-2 (149 aa).

The first 24 residues, 1–24 (MARIPECTILLLLCMCVLAVPAQC), serve as a signal peptide directing secretion. 6 cysteine pairs are disulfide-bonded: Cys-30/Cys-78, Cys-44/Cys-93, Cys-47/Cys-131, Cys-55/Cys-109, Cys-59/Cys-111, and Cys-114/Cys-121. A glycan (N-linked (GlcNAc...) asparagine) is linked at Asn-34.

Belongs to the glycoprotein hormones subunit beta family. As to quaternary structure, heterodimer of an alpha and a beta chain.

It is found in the secreted. Involved in gametogenesis and steroidogenesis. The polypeptide is Gonadotropin subunit beta-2 (cgbb) (Clupea pallasii (Pacific herring)).